We begin with the raw amino-acid sequence, 411 residues long: MAMATPTTNGSFLLGSGLDCGSSDVARMQGVLARVRGPFTPTQWMELEHQALIYKHIVANAPVPAGLLLPIRRSLHPPVFPHFSSGGILGSSSLGWGSFQLGYSGSADSEPGRCRRTDGKKWRCSRDAVVDQKYCERHINRGRHRSRKHVEGQSSHAAKATVPAIAQPPIGASNGKLSGSHGVSNELTKTLATNRMMLDKANLIERSQDYTNQQHNILQNNTKGDNWSEEMSSQADYAVIPAGSLMNTPQSANLNPIPQQQRCKQSLFGKGIQHDDIQLSISIPVDNSDLPTNYNKAQMDHVVGGSSNGGNNTRASWIPGSWEASIGGPLGEFFTNTSSASDDKGKSRHPPSLNLLADGHTTSPQLQSPTGVLQMTSFSSVPSSTVSSPAGSLCNGLLTSGLVNAQTVQTL.

The QLQ domain occupies Pro-38–Arg-73. In terms of domain architecture, WRC spans Asp-108 to Gly-152. 2 consecutive short sequence motifs (bipartite nuclear localization signal) follow at residues Arg-113 to Arg-123 and Arg-141 to Lys-148. Residues Phe-333–Pro-369 are disordered. Polar residues predominate over residues His-360 to Pro-369.

It belongs to the GRF family.

The protein resides in the nucleus. Transcription activator that plays a regulatory role in gibberellin-induced stem elongation. The polypeptide is Growth-regulating factor 7 (GRF7) (Oryza sativa subsp. japonica (Rice)).